Consider the following 881-residue polypeptide: Phosphoenolpyruvate carboxylase (881 aa).

Active-site residues include histidine 138 and lysine 545.

Belongs to the PEPCase type 1 family. It depends on Mg(2+) as a cofactor.

The catalysed reaction is oxaloacetate + phosphate = phosphoenolpyruvate + hydrogencarbonate. Functionally, forms oxaloacetate, a four-carbon dicarboxylic acid source for the tricarboxylic acid cycle. This Shewanella oneidensis (strain ATCC 700550 / JCM 31522 / CIP 106686 / LMG 19005 / NCIMB 14063 / MR-1) protein is Phosphoenolpyruvate carboxylase.